Reading from the N-terminus, the 293-residue chain is Diaminopimelate epimerase (293 aa).

Substrate-binding residues include asparagine 17, glutamine 47, and asparagine 67. Cysteine 76 serves as the catalytic Proton donor. Substrate is bound by residues 77–78, asparagine 164, asparagine 197, and 215–216; these read GN and ER. Cysteine 224 serves as the catalytic Proton acceptor. 225-226 serves as a coordination point for substrate; it reads GS.

Belongs to the diaminopimelate epimerase family. As to quaternary structure, homodimer.

The protein localises to the cytoplasm. The enzyme catalyses (2S,6S)-2,6-diaminopimelate = meso-2,6-diaminopimelate. Its pathway is amino-acid biosynthesis; L-lysine biosynthesis via DAP pathway; DL-2,6-diaminopimelate from LL-2,6-diaminopimelate: step 1/1. Its function is as follows. Catalyzes the stereoinversion of LL-2,6-diaminopimelate (L,L-DAP) to meso-diaminopimelate (meso-DAP), a precursor of L-lysine and an essential component of the bacterial peptidoglycan. The polypeptide is Diaminopimelate epimerase (Rhodopseudomonas palustris (strain HaA2)).